The primary structure comprises 215 residues: NADH-quinone oxidoreductase subunit C (215 aa).

This sequence belongs to the complex I 30 kDa subunit family. In terms of assembly, NDH-1 is composed of 14 different subunits. Subunits NuoB, C, D, E, F, and G constitute the peripheral sector of the complex.

Its subcellular location is the cell inner membrane. It carries out the reaction a quinone + NADH + 5 H(+)(in) = a quinol + NAD(+) + 4 H(+)(out). In terms of biological role, NDH-1 shuttles electrons from NADH, via FMN and iron-sulfur (Fe-S) centers, to quinones in the respiratory chain. The immediate electron acceptor for the enzyme in this species is believed to be ubiquinone. Couples the redox reaction to proton translocation (for every two electrons transferred, four hydrogen ions are translocated across the cytoplasmic membrane), and thus conserves the redox energy in a proton gradient. This Dinoroseobacter shibae (strain DSM 16493 / NCIMB 14021 / DFL 12) protein is NADH-quinone oxidoreductase subunit C.